Reading from the N-terminus, the 122-residue chain is Acidic phospholipase A2 (122 aa).

7 disulfides stabilise this stretch: Cys26–Cys115, Cys28–Cys44, Cys43–Cys95, Cys49–Cys122, Cys50–Cys88, Cys57–Cys81, and Cys75–Cys86. Positions 27, 29, and 31 each coordinate Ca(2+). The active site involves His47. Ca(2+) is bound at residue Asp48. Asp89 is a catalytic residue.

In terms of assembly, may form tetramers. Ca(2+) serves as cofactor. Expressed by the venom gland.

The protein resides in the secreted. The enzyme catalyses a 1,2-diacyl-sn-glycero-3-phosphocholine + H2O = a 1-acyl-sn-glycero-3-phosphocholine + a fatty acid + H(+). PLA2 catalyzes the calcium-dependent hydrolysis of the 2-acyl groups in 3-sn-phosphoglycerides. In vivo, is non-lethal to mice when intravenously injected up to a concentration of 30 ug, however does show significant edematogenic activity at the injection site. The chain is Acidic phospholipase A2 from Lachesis acrochorda (Chocoan bushmaster).